We begin with the raw amino-acid sequence, 1101 residues long: ATP-dependent DNA helicase mph1 (1101 aa).

Disordered stretches follow at residues 22–59 (PGTS…SPDR), 95–138 (LTQP…QYHD), 154–231 (FEEE…TNRP), and 250–270 (SSQR…PTHH). A compositionally biased stretch (polar residues) spans 24–48 (TSDTVESVQTNNRPAKQSDISISQG). Residues 170–190 (TPARTAAAPCAAPKGTAADVP) are compositionally biased toward low complexity. Residues 191–202 (FDLDDIPDDAFD) are compositionally biased toward acidic residues. Over residues 209 to 228 (PPRSTSQATRGPPVQSQFRT) the composition is skewed to polar residues. Positions 296–464 (IAQRGLFHNL…AIIDDLGIAK (169 aa)) constitute a Helicase ATP-binding domain. 309-316 (LPTGLGKT) provides a ligand contact to ATP. The short motif at 412–415 (DEAH) is the DEAH box element. The Helicase C-terminal domain occupies 634–808 (YLKQVVLNHF…GTRFTFHDDK (175 aa)). Disordered regions lie at residues 824–890 (RQID…PTPE) and 991–1067 (SRDP…QDAF). Over residues 842-854 (RRARPPKRPPKKF) the composition is skewed to basic residues.

Belongs to the DEAD box helicase family. DEAH subfamily. FANCM sub-subfamily. As to quaternary structure, interacts with the MHF histone-fold complex to form the FANCM-MHF complex.

It localises to the nucleus. It catalyses the reaction ATP + H2O = ADP + phosphate + H(+). Its function is as follows. ATP-dependent DNA helicase involved in DNA damage repair by homologous recombination and in genome maintenance. Capable of unwinding D-loops. Plays a role in limiting crossover recombinants during mitotic DNA double-strand break (DSB) repair. Component of a FANCM-MHF complex which promotes gene conversion at blocked replication forks, probably by reversal of the stalled fork. The sequence is that of ATP-dependent DNA helicase mph1 from Aspergillus fumigatus (strain CBS 144.89 / FGSC A1163 / CEA10) (Neosartorya fumigata).